Reading from the N-terminus, the 199-residue chain is Glycerol-3-phosphate acyltransferase (199 aa).

The next 5 helical transmembrane spans lie at 5–25, 51–71, 79–99, 112–132, and 153–173; these read AFLV…VALV, KLGV…VLCA, VFLS…VFLY, VFLG…VAVI, and CAWL…GLVI.

It belongs to the PlsY family. As to quaternary structure, probably interacts with PlsX.

The protein resides in the cell inner membrane. The enzyme catalyses an acyl phosphate + sn-glycerol 3-phosphate = a 1-acyl-sn-glycero-3-phosphate + phosphate. It functions in the pathway lipid metabolism; phospholipid metabolism. Catalyzes the transfer of an acyl group from acyl-phosphate (acyl-PO(4)) to glycerol-3-phosphate (G3P) to form lysophosphatidic acid (LPA). This enzyme utilizes acyl-phosphate as fatty acyl donor, but not acyl-CoA or acyl-ACP. This Solidesulfovibrio magneticus (strain ATCC 700980 / DSM 13731 / RS-1) (Desulfovibrio magneticus) protein is Glycerol-3-phosphate acyltransferase.